We begin with the raw amino-acid sequence, 130 residues long: Phosphoribosyl-AMP cyclohydrolase 1 (130 aa).

Aspartate 77 contacts Mg(2+). Residue cysteine 78 coordinates Zn(2+). Aspartate 79 and aspartate 81 together coordinate Mg(2+). Zn(2+) contacts are provided by cysteine 95 and cysteine 102.

This sequence belongs to the PRA-CH family. Homodimer. It depends on Mg(2+) as a cofactor. Requires Zn(2+) as cofactor.

The protein resides in the cytoplasm. It catalyses the reaction 1-(5-phospho-beta-D-ribosyl)-5'-AMP + H2O = 1-(5-phospho-beta-D-ribosyl)-5-[(5-phospho-beta-D-ribosylamino)methylideneamino]imidazole-4-carboxamide. It functions in the pathway amino-acid biosynthesis; L-histidine biosynthesis; L-histidine from 5-phospho-alpha-D-ribose 1-diphosphate: step 3/9. Catalyzes the hydrolysis of the adenine ring of phosphoribosyl-AMP. In Pseudomonas fluorescens (strain ATCC BAA-477 / NRRL B-23932 / Pf-5), this protein is Phosphoribosyl-AMP cyclohydrolase 1.